Here is a 355-residue protein sequence, read N- to C-terminus: 3-dehydroquinate synthase (355 aa).

Residues 71-76 (EGEERK), 105-109 (GVVGD), 129-130 (TS), lysine 142, and lysine 151 each bind NAD(+). Zn(2+) is bound by residues glutamate 184, histidine 246, and histidine 263.

The protein belongs to the sugar phosphate cyclases superfamily. Dehydroquinate synthase family. NAD(+) serves as cofactor. Co(2+) is required as a cofactor. The cofactor is Zn(2+).

The protein localises to the cytoplasm. It catalyses the reaction 7-phospho-2-dehydro-3-deoxy-D-arabino-heptonate = 3-dehydroquinate + phosphate. The protein operates within metabolic intermediate biosynthesis; chorismate biosynthesis; chorismate from D-erythrose 4-phosphate and phosphoenolpyruvate: step 2/7. Catalyzes the conversion of 3-deoxy-D-arabino-heptulosonate 7-phosphate (DAHP) to dehydroquinate (DHQ). The sequence is that of 3-dehydroquinate synthase from Streptococcus pneumoniae serotype 4 (strain ATCC BAA-334 / TIGR4).